The chain runs to 270 residues: Putative pyruvate, phosphate dikinase regulatory protein (270 aa).

148–155 provides a ligand contact to ADP; sequence GVSRTSKT.

Belongs to the pyruvate, phosphate/water dikinase regulatory protein family. PDRP subfamily.

The catalysed reaction is N(tele)-phospho-L-histidyl/L-threonyl-[pyruvate, phosphate dikinase] + ADP = N(tele)-phospho-L-histidyl/O-phospho-L-threonyl-[pyruvate, phosphate dikinase] + AMP + H(+). It carries out the reaction N(tele)-phospho-L-histidyl/O-phospho-L-threonyl-[pyruvate, phosphate dikinase] + phosphate + H(+) = N(tele)-phospho-L-histidyl/L-threonyl-[pyruvate, phosphate dikinase] + diphosphate. Bifunctional serine/threonine kinase and phosphorylase involved in the regulation of the pyruvate, phosphate dikinase (PPDK) by catalyzing its phosphorylation/dephosphorylation. This is Putative pyruvate, phosphate dikinase regulatory protein from Bacillus cereus (strain B4264).